The chain runs to 191 residues: Guanylate kinase (191 aa).

The 179-residue stretch at 10–188 (GQLIVLTGPS…ALHRLVKLIG (179 aa)) folds into the Guanylate kinase-like domain. 17–24 (GPSGVGKG) contributes to the ATP binding site.

It belongs to the guanylate kinase family.

It localises to the cytoplasm. It carries out the reaction GMP + ATP = GDP + ADP. In terms of biological role, essential for recycling GMP and indirectly, cGMP. This chain is Guanylate kinase (gmk), found in Synechocystis sp. (strain ATCC 27184 / PCC 6803 / Kazusa).